The primary structure comprises 267 residues: B3 domain-containing protein Os02g0455800 (267 aa).

The segment at residues 30 to 131 (EKFLMPSDLC…RLFICCRLGT (102 aa)) is a DNA-binding region (TF-B3). Positions 172–221 (QARLHDGNQDGGGAPSRHVPSSGRRVEAQLSRVSSRRQRRTMKHSIPEPT) are disordered. Residues 205–214 (SSRRQRRTMK) show a composition bias toward basic residues.

It localises to the nucleus. This is B3 domain-containing protein Os02g0455800 from Oryza sativa subsp. japonica (Rice).